The sequence spans 194 residues: dTTP/UTP pyrophosphatase (194 aa).

The active-site Proton acceptor is the Asp73.

This sequence belongs to the Maf family. YhdE subfamily. Requires a divalent metal cation as cofactor.

The protein localises to the cytoplasm. It catalyses the reaction dTTP + H2O = dTMP + diphosphate + H(+). It carries out the reaction UTP + H2O = UMP + diphosphate + H(+). Nucleoside triphosphate pyrophosphatase that hydrolyzes dTTP and UTP. May have a dual role in cell division arrest and in preventing the incorporation of modified nucleotides into cellular nucleic acids. The protein is dTTP/UTP pyrophosphatase of Clostridium botulinum (strain Kyoto / Type A2).